The primary structure comprises 240 residues: MPRAQLDKDPHDVAGMFDDVARRYDLTNDVLSLGMDRLWRRATLDALGARPGERVLDLAAGTGTSSADLADDGVDVVSCDFSTGMVAEGKRRRPDLAFVAGDATRLPFADGSFDAVTISFGLRNVSPAVAGLSEMLRVTRPGGRLVVAEFSTPPWAPFEALYGFYLQTFLTPLAKAVSSNPEAYDYLEESIRDWPDQLGVAALLHEAGWRGVGYRNLTGGIVALHRARKIATENTSAGRG.

S-adenosyl-L-methionine-binding positions include Thr62, Asp80, 102–103, and Ser119; that span reads DA.

The protein belongs to the class I-like SAM-binding methyltransferase superfamily. MenG/UbiE family.

It catalyses the reaction a 2-demethylmenaquinol + S-adenosyl-L-methionine = a menaquinol + S-adenosyl-L-homocysteine + H(+). Its pathway is quinol/quinone metabolism; menaquinone biosynthesis; menaquinol from 1,4-dihydroxy-2-naphthoate: step 2/2. Its function is as follows. Methyltransferase required for the conversion of demethylmenaquinol (DMKH2) to menaquinol (MKH2). In Beutenbergia cavernae (strain ATCC BAA-8 / DSM 12333 / CCUG 43141 / JCM 11478 / NBRC 16432 / NCIMB 13614 / HKI 0122), this protein is Demethylmenaquinone methyltransferase.